A 238-amino-acid polypeptide reads, in one-letter code: ATP-dependent dethiobiotin synthetase BioD (238 aa).

13-18 (DIGKTF) contributes to the ATP binding site. Residue threonine 17 participates in Mg(2+) binding. Lysine 38 is a catalytic residue. Serine 42 contacts substrate. ATP contacts are provided by residues aspartate 55, 116–119 (EGSG), 209–211 (PRI), and asparagine 216. Mg(2+)-binding residues include aspartate 55 and glutamate 116.

This sequence belongs to the dethiobiotin synthetase family. As to quaternary structure, homodimer. Mg(2+) is required as a cofactor.

It localises to the cytoplasm. The catalysed reaction is (7R,8S)-7,8-diammoniononanoate + CO2 + ATP = (4R,5S)-dethiobiotin + ADP + phosphate + 3 H(+). Its pathway is cofactor biosynthesis; biotin biosynthesis; biotin from 7,8-diaminononanoate: step 1/2. Functionally, catalyzes a mechanistically unusual reaction, the ATP-dependent insertion of CO2 between the N7 and N8 nitrogen atoms of 7,8-diaminopelargonic acid (DAPA, also called 7,8-diammoniononanoate) to form a ureido ring. This is ATP-dependent dethiobiotin synthetase BioD from Clostridium novyi (strain NT).